The sequence spans 782 residues: E3 ubiquitin-protein ligase SopA (782 aa).

The interval 137–171 (VSVSANNRPTVSEGRTPPVSPSLSLQATSSPSSPA) is disordered. Over residues 157-171 (PSLSLQATSSPSSPA) the composition is skewed to low complexity. The active-site Glycyl thioester intermediate is C753.

Belongs to the SopA E3 ligase family. Ubiquitinated in the presence of host E1 ubiquitin-activating enzyme, E2 ubiquitin-conjugating enzyme and ubiquitin.

The protein localises to the secreted. It is found in the host cell. The catalysed reaction is S-ubiquitinyl-[E2 ubiquitin-conjugating enzyme]-L-cysteine + [acceptor protein]-L-lysine = [E2 ubiquitin-conjugating enzyme]-L-cysteine + N(6)-ubiquitinyl-[acceptor protein]-L-lysine.. Functionally, effector proteins function to alter host cell physiology and promote bacterial survival in host tissues. This protein is an E3 ubiquitin ligase that interferes with host's ubiquitination pathway. The sequence is that of E3 ubiquitin-protein ligase SopA (sopA) from Salmonella heidelberg (strain SL476).